A 260-amino-acid polypeptide reads, in one-letter code: Taurine import ATP-binding protein TauB (260 aa).

Residues 6 to 235 (AQQVSVVYAS…RYAHGEPMRS (230 aa)) enclose the ABC transporter domain. 40 to 47 (GASGCGKS) lines the ATP pocket.

It belongs to the ABC transporter superfamily. Taurine importer (TC 3.A.1.17.1) family. As to quaternary structure, the complex is composed of two ATP-binding proteins (TauB), two transmembrane proteins (TauC) and a solute-binding protein (TauA).

It localises to the cell inner membrane. It carries out the reaction taurine(out) + ATP + H2O = taurine(in) + ADP + phosphate + H(+). Functionally, part of the ABC transporter complex TauABC involved in taurine import. Responsible for energy coupling to the transport system. This chain is Taurine import ATP-binding protein TauB, found in Burkholderia pseudomallei (strain 1710b).